Reading from the N-terminus, the 215-residue chain is Cytochrome b6 (215 aa).

The helical transmembrane segment at Ile-32 to Phe-52 threads the bilayer. Cys-35 contacts heme c. Heme b is bound by residues His-86 and His-100. A run of 3 helical transmembrane segments spans residues Ala-90–Phe-110, Leu-116–Tyr-136, and Leu-186–Ile-206. Positions 187 and 202 each coordinate heme b.

It belongs to the cytochrome b family. PetB subfamily. The 4 large subunits of the cytochrome b6-f complex are cytochrome b6, subunit IV (17 kDa polypeptide, PetD), cytochrome f and the Rieske protein, while the 4 small subunits are PetG, PetL, PetM and PetN. The complex functions as a dimer. Heme b is required as a cofactor. Requires heme c as cofactor.

It is found in the plastid. Its subcellular location is the chloroplast thylakoid membrane. In terms of biological role, component of the cytochrome b6-f complex, which mediates electron transfer between photosystem II (PSII) and photosystem I (PSI), cyclic electron flow around PSI, and state transitions. This is Cytochrome b6 from Jasminum nudiflorum (Winter jasmine).